The chain runs to 166 residues: Ribosome maturation factor RimP (166 aa).

This sequence belongs to the RimP family.

The protein localises to the cytoplasm. Required for maturation of 30S ribosomal subunits. This chain is Ribosome maturation factor RimP, found in Psychrobacter arcticus (strain DSM 17307 / VKM B-2377 / 273-4).